The chain runs to 185 residues: Ribose 1,5-bisphosphate phosphokinase PhnN (185 aa).

10–17 (GPSGSGKD) provides a ligand contact to ATP.

It belongs to the ribose 1,5-bisphosphokinase family.

The enzyme catalyses alpha-D-ribose 1,5-bisphosphate + ATP = 5-phospho-alpha-D-ribose 1-diphosphate + ADP. It functions in the pathway metabolic intermediate biosynthesis; 5-phospho-alpha-D-ribose 1-diphosphate biosynthesis; 5-phospho-alpha-D-ribose 1-diphosphate from D-ribose 5-phosphate (route II): step 3/3. Catalyzes the phosphorylation of ribose 1,5-bisphosphate to 5-phospho-D-ribosyl alpha-1-diphosphate (PRPP). This chain is Ribose 1,5-bisphosphate phosphokinase PhnN, found in Shigella dysenteriae serotype 1 (strain Sd197).